The primary structure comprises 62 residues: MTIAFQLAVFALIATSSILLISVPVVFASSDGWSSNKNVVFSGTSLWIGLVFLVAILNSLIS.

2 consecutive transmembrane segments (helical) span residues 8–28 and 41–61; these read AVFA…VVFA and FSGT…NSLI.

This sequence belongs to the PsbZ family. PSII is composed of 1 copy each of membrane proteins PsbA, PsbB, PsbC, PsbD, PsbE, PsbF, PsbH, PsbI, PsbJ, PsbK, PsbL, PsbM, PsbT, PsbY, PsbZ, Psb30/Ycf12, at least 3 peripheral proteins of the oxygen-evolving complex and a large number of cofactors. It forms dimeric complexes.

Its subcellular location is the plastid. It is found in the chloroplast thylakoid membrane. In terms of biological role, may control the interaction of photosystem II (PSII) cores with the light-harvesting antenna, regulates electron flow through the 2 photosystem reaction centers. PSII is a light-driven water plastoquinone oxidoreductase, using light energy to abstract electrons from H(2)O, generating a proton gradient subsequently used for ATP formation. In Liriodendron tulipifera (Tuliptree), this protein is Photosystem II reaction center protein Z.